We begin with the raw amino-acid sequence, 192 residues long: MAP6 domain-containing protein 1 (192 aa).

S-palmitoyl cysteine attachment occurs at residues Cys-5, Cys-10, and Cys-11. The tract at residues 36-106 is disordered; it reads LESEEPIPGG…RTKPSATPGR (71 aa). Ser-38 carries the phosphoserine modification. Residues 43 to 58 show a composition bias toward low complexity; the sequence is PGGVPSRRGPSPAGSR. 2 mn regions span residues 123–136 and 158–170; these read TTSYRQEFQAWTGV and DGSPRAGFQAPEV. The residue at position 160 (Ser-160) is a Phosphoserine.

Belongs to the STOP family. As to quaternary structure, interacts with calmodulin. In terms of processing, palmitoylated. Palmitoylation enhances association with microtubules.

It is found in the golgi apparatus. It localises to the cytoplasm. The protein resides in the cytoskeleton. May have microtubule-stabilizing activity. The protein is MAP6 domain-containing protein 1 (MAP6D1) of Bos taurus (Bovine).